A 401-amino-acid chain; its full sequence is Tumor necrosis factor receptor superfamily member 11B (401 aa).

Residues 1 to 21 (MNKWLCCALLVLLDIIEWTTQ) form the signal peptide. 4 TNFR-Cys repeats span residues 24–62 (LPPK…KTLC), 65–105 (CPDH…NRVC), 107–142 (CEEG…NTVC), and 145–185 (CPDG…DNVC). Intrachain disulfides connect cysteine 41–cysteine 54, cysteine 44–cysteine 62, cysteine 65–cysteine 80, cysteine 83–cysteine 97, cysteine 87–cysteine 105, cysteine 107–cysteine 118, cysteine 124–cysteine 142, and cysteine 145–cysteine 160. Asparagine 98 is a glycosylation site (N-linked (GlcNAc...) asparagine). Asparagine 165 and asparagine 178 each carry an N-linked (GlcNAc...) asparagine glycan. Residues cysteine 166 and cysteine 185 are joined by a disulfide bond. 2 Death domains span residues 198-269 (DVTL…MVKK) and 283-365 (RHLG…THSL). Asparagine 289 carries N-linked (GlcNAc...) asparagine glycosylation.

As to quaternary structure, homodimer. Interacts with TNFSF10 and TNFSF11. In terms of tissue distribution, highly expressed in liver, lung, stomach, intestines and calvaria. Highly expressed in decidua and placenta, and in embryo.

The protein resides in the secreted. Acts as a decoy receptor for TNFSF11/RANKL and thereby neutralizes its function in osteoclastogenesis. Inhibits the activation of osteoclasts and promotes osteoclast apoptosis in vitro. Bone homeostasis seems to depend on the local ratio between TNFSF11 and TNFRSF11B. May also play a role in preventing arterial calcification. May act as decoy receptor for TNFSF10/TRAIL and protect against apoptosis. TNFSF10/TRAIL binding blocks the inhibition of osteoclastogenesis. The protein is Tumor necrosis factor receptor superfamily member 11B (Tnfrsf11b) of Mus musculus (Mouse).